Consider the following 388-residue polypeptide: Na(+)/H(+) antiporter NhaA (388 aa).

Transmembrane regions (helical) follow at residues 14 to 34, 59 to 79, 95 to 115, 125 to 145, 154 to 174, 179 to 199, 219 to 239, 254 to 274, 292 to 312, 328 to 348, and 356 to 376; these read GGII…MGAT, MLLW…GLEV, VFPV…YLAF, GWAI…ALLG, IFLM…IALF, LSIV…LLNL, VLKS…FIPL, ILHP…NAGV, IIAG…WLAL, IMAV…IASL, and ALIN…AVVG.

The protein belongs to the NhaA Na(+)/H(+) (TC 2.A.33) antiporter family.

The protein resides in the cell inner membrane. It carries out the reaction Na(+)(in) + 2 H(+)(out) = Na(+)(out) + 2 H(+)(in). In terms of biological role, na(+)/H(+) antiporter that extrudes sodium in exchange for external protons. The polypeptide is Na(+)/H(+) antiporter NhaA (Salmonella arizonae (strain ATCC BAA-731 / CDC346-86 / RSK2980)).